Reading from the N-terminus, the 334-residue chain is GTP 3',8-cyclase (334 aa).

The 225-residue stretch at 11-235 (GFNRKVDYLR…VESAESSQGP (225 aa)) folds into the Radical SAM core domain. Arg-20 provides a ligand contact to GTP. Residues Cys-27 and Cys-31 each contribute to the [4Fe-4S] cluster site. S-adenosyl-L-methionine is bound at residue Tyr-33. Cys-34 is a [4Fe-4S] cluster binding site. Residue Arg-69 coordinates GTP. Gly-73 serves as a coordination point for S-adenosyl-L-methionine. Thr-100 is a GTP binding site. Ser-124 serves as a coordination point for S-adenosyl-L-methionine. Lys-161 lines the GTP pocket. Position 195 (Met-195) interacts with S-adenosyl-L-methionine. Residues Cys-260 and Cys-263 each contribute to the [4Fe-4S] cluster site. 265–267 (RVR) lines the GTP pocket. Cys-277 contributes to the [4Fe-4S] cluster binding site.

It belongs to the radical SAM superfamily. MoaA family. As to quaternary structure, monomer and homodimer. It depends on [4Fe-4S] cluster as a cofactor.

The catalysed reaction is GTP + AH2 + S-adenosyl-L-methionine = (8S)-3',8-cyclo-7,8-dihydroguanosine 5'-triphosphate + 5'-deoxyadenosine + L-methionine + A + H(+). Its pathway is cofactor biosynthesis; molybdopterin biosynthesis. Catalyzes the cyclization of GTP to (8S)-3',8-cyclo-7,8-dihydroguanosine 5'-triphosphate. The protein is GTP 3',8-cyclase of Pseudomonas entomophila (strain L48).